The chain runs to 399 residues: MYAYPNELGRYGEFGGKFVPETLMQPLKEIEQAFNELKEDPAFEQEYLSLLHNYSGRPTALTYADQLSAYLGGAKIYLKREDLNHTGAHKINNALGQALLAKKMGKSNIIAETGAGQHGVAAATVAAKFGLSCTVFMGKEDVERQSLNVFRMKLLGAEVIPVTSGNGTLKDATNEAIRYWVQHCSDHFYMIGSVVGPHPYPQIVSEFQRMIGDEAKEQMLKKEGRLPHKVIACVGGGSNAIGMYRAFLDDEVDLIGVEAAGKGIDTPLHAATITKGTKGVIHGSLTYLIQDEFGQIIEPYSISAGLDYPGIGPEHAYLHASGRVQYVSATDQEALDALKLLTEKEGILPAIESAHALAKAFEMSRTMSEDEIILVCLSGRGDKDVHTLMNVLESEGKTK.

An N6-(pyridoxal phosphate)lysine modification is found at lysine 90.

It belongs to the TrpB family. Tetramer of two alpha and two beta chains. Pyridoxal 5'-phosphate is required as a cofactor.

It carries out the reaction (1S,2R)-1-C-(indol-3-yl)glycerol 3-phosphate + L-serine = D-glyceraldehyde 3-phosphate + L-tryptophan + H2O. It functions in the pathway amino-acid biosynthesis; L-tryptophan biosynthesis; L-tryptophan from chorismate: step 5/5. The beta subunit is responsible for the synthesis of L-tryptophan from indole and L-serine. This Bacillus pumilus (strain SAFR-032) protein is Tryptophan synthase beta chain.